A 520-amino-acid polypeptide reads, in one-letter code: L-tyrosine:2-oxoglutarate aminotransferase amt1 (520 aa).

This sequence belongs to the class-I pyridoxal-phosphate-dependent aminotransferase family. Pyridoxal 5'-phosphate serves as cofactor.

It carries out the reaction L-tyrosine + 2-oxoglutarate = 3-(4-hydroxyphenyl)pyruvate + L-glutamate. It participates in secondary metabolite biosynthesis. Its function is as follows. An L-tyrosine:2-oxoglutarate aminotransferase (probably amt1) and atromentin synthetase nps3 catalyze consecutive steps to turn over L-tyrosine into atromentin, which represents the generic precursor molecule for the entire terphenylquinone and pulvinic acid family of pigments, which are widely distributed secondary metabolites in homobasidiomycetes. The first step catalyzed by amt1 converts L-tyrosine in to 4-hydroxyphenylpyruvate (4-HPP). Adenylation of two 4-HPP monomers by the nps3 adenylation (A) domain, covalent tethering of the monomers as a thioester and oxoester onto the nps3 thiolation (T) and thioesterase (TE) domains, respectively, and symmetric C-C-bond formation between two monomers catalyzed by the nps3 TE domain leads to atromentin. Follow-up products of atromentin in S.lacrymans include atromentic acid, xerocomic acid, isoxerocomic acid and variegatic acid. The chain is L-tyrosine:2-oxoglutarate aminotransferase amt1 (amt1) from Serpula lacrymans var. lacrymans (strain S7.9) (Dry rot fungus).